A 145-amino-acid polypeptide reads, in one-letter code: Probable disulfide formation protein (145 aa).

Residues 9 to 28 (ENLLLLIWVQAFLALAGSLF) traverse the membrane as a helical segment. A disulfide bridge links Cys-38 with Cys-41. The next 2 membrane-spanning stretches (helical) occupy residues 43–62 (YQRILMYPLVLIYGVAAIKK) and 69–86 (PGLFMSGIGLLVSTYHYL). A disulfide bridge links Cys-100 with Cys-106. The helical transmembrane segment at 115–137 (GFISIPFMAGVAFLIIFVLHLLI) threads the bilayer.

The protein belongs to the DsbB family. BdbC subfamily.

The protein resides in the cell membrane. Its function is as follows. Required for disulfide bond formation in some proteins. The sequence is that of Probable disulfide formation protein from Oceanobacillus iheyensis (strain DSM 14371 / CIP 107618 / JCM 11309 / KCTC 3954 / HTE831).